A 185-amino-acid polypeptide reads, in one-letter code: uncharacterized protein (185 aa).

5 consecutive transmembrane segments (helical) span residues 4-24 (TYLTGYFPLIAILLFSSSLSI), 54-74 (LALFAAFALLYFMVLSALKLI), 98-118 (LRMGSMIYLGGGILSFVLLQN), 119-139 (VIWIVIWFAVVTLAYFVFTVY), and 153-173 (FILLELLFWFTFVIGILFIFI).

Its subcellular location is the cell membrane. This is an uncharacterized protein from Bacillus subtilis (strain 168).